A 240-amino-acid chain; its full sequence is MSPTIELLCGHRSIRHFTDEPVTDAQREAIIAAARSTSSSSFLQCSSIIRITDRALREALVPLTGGQKHVAQAAEFWVFCADFNRHLQICPDAQLGLAEQLLLGVVDTAMMGQNALTAAESLGLGGVYIGGIRNNIESVTELLKLPKHVLPLFGLCLGWPADNPDLKPRLPAELVVHENQYQPLDEKLLARYDEQLAEYYLTRGSNTRRDTWSDHIRRTLIKENRPFILEYLHKQGWATR.

Residues histidine 11–arginine 15, serine 39, glutamine 67, tyrosine 128–glycine 131, and lysine 167–arginine 169 each bind FMN.

Belongs to the flavin oxidoreductase frp family. As to quaternary structure, homodimer. It depends on FMN as a cofactor.

Its function is as follows. Catalyzes the reduction of nitroaromatic compounds using NADPH. Has a broad electron acceptor specificity. Reduces nitrofurazone by a ping-pong bi-bi mechanism possibly to generate a two-electron transfer product. In Salmonella typhimurium (strain LT2 / SGSC1412 / ATCC 700720), this protein is Oxygen-insensitive NADPH nitroreductase (nfsA).